The following is an 86-amino-acid chain: Muscarinic toxin MTX6 (86 aa).

The first 21 residues, 1 to 21, serve as a signal peptide directing secretion; it reads MKTLLLTLVVVTILCLDLGYT. Disulfide bonds link Cys24–Cys45, Cys38–Cys63, Cys67–Cys78, and Cys79–Cys84.

Belongs to the three-finger toxin family. Short-chain subfamily. Aminergic toxin sub-subfamily. In terms of assembly, monomer. Expressed by the venom gland.

The protein resides in the secreted. Functionally, binds to the muscarinic acetylcholine receptor (CHRM). The sequence is that of Muscarinic toxin MTX6 from Ophiophagus hannah (King cobra).